The primary structure comprises 156 residues: ATP synthase subunit b (156 aa).

A helical transmembrane segment spans residues 7-27 (LIGQLIAFALFVAFCMKFVWP).

Belongs to the ATPase B chain family. As to quaternary structure, F-type ATPases have 2 components, F(1) - the catalytic core - and F(0) - the membrane proton channel. F(1) has five subunits: alpha(3), beta(3), gamma(1), delta(1), epsilon(1). F(0) has three main subunits: a(1), b(2) and c(10-14). The alpha and beta chains form an alternating ring which encloses part of the gamma chain. F(1) is attached to F(0) by a central stalk formed by the gamma and epsilon chains, while a peripheral stalk is formed by the delta and b chains.

The protein localises to the cell inner membrane. Its function is as follows. F(1)F(0) ATP synthase produces ATP from ADP in the presence of a proton or sodium gradient. F-type ATPases consist of two structural domains, F(1) containing the extramembraneous catalytic core and F(0) containing the membrane proton channel, linked together by a central stalk and a peripheral stalk. During catalysis, ATP synthesis in the catalytic domain of F(1) is coupled via a rotary mechanism of the central stalk subunits to proton translocation. In terms of biological role, component of the F(0) channel, it forms part of the peripheral stalk, linking F(1) to F(0). The polypeptide is ATP synthase subunit b (Actinobacillus pleuropneumoniae serotype 7 (strain AP76)).